We begin with the raw amino-acid sequence, 133 residues long: Protein PsiE homolog (133 aa).

4 helical membrane-spanning segments follow: residues 13–33, 55–75, 81–101, and 105–125; these read LQWI…IFLI, VESI…IKYF, FPLR…IIVS, and PMET…LYIS.

The protein belongs to the PsiE family.

The protein resides in the cell membrane. This Bacillus cereus (strain ATCC 10987 / NRS 248) protein is Protein PsiE homolog.